A 130-amino-acid chain; its full sequence is Small ribosomal subunit protein uS9 (130 aa).

Residues T105–R130 form a disordered region. Residues K111–R130 are compositionally biased toward basic residues.

This sequence belongs to the universal ribosomal protein uS9 family.

The sequence is that of Small ribosomal subunit protein uS9 from Syntrophomonas wolfei subsp. wolfei (strain DSM 2245B / Goettingen).